The following is a 238-amino-acid chain: Large ribosomal subunit protein uL2 (238 aa).

The disordered stretch occupies residues 199 to 238; the sequence is PHGGGLHQSVSRPSTVSRNAPPGRKVGHIAARRTGRKEGA. A compositionally biased stretch (polar residues) spans 206 to 216; sequence QSVSRPSTVSR. Over residues 223–238 the composition is skewed to basic residues; it reads KVGHIAARRTGRKEGA.

The protein belongs to the universal ribosomal protein uL2 family. As to quaternary structure, part of the 50S ribosomal subunit. Forms a bridge to the 30S subunit in the 70S ribosome.

In terms of biological role, one of the primary rRNA binding proteins. Required for association of the 30S and 50S subunits to form the 70S ribosome, for tRNA binding and peptide bond formation. It has been suggested to have peptidyltransferase activity; this is somewhat controversial. Makes several contacts with the 16S rRNA in the 70S ribosome. This chain is Large ribosomal subunit protein uL2, found in Sulfurisphaera tokodaii (strain DSM 16993 / JCM 10545 / NBRC 100140 / 7) (Sulfolobus tokodaii).